Reading from the N-terminus, the 99-residue chain is Transcriptional repressor PagR (99 aa).

The HTH arsR-type domain occupies 9–99 (IEYMSLEDDA…GIIKLLNPIQ (91 aa)). The segment at residues 43–62 (NVTQIIQILKLPQSTVSQHL) is a DNA-binding region (H-T-H motif).

Functionally, represses the expression of the pagA and atxA genes. This is Transcriptional repressor PagR (pagR) from Bacillus anthracis.